The following is a 604-amino-acid chain: Arginine--tRNA ligase (604 aa).

The 'HIGH' region signature appears at 142-152; the sequence is PNIAKEMHVGH.

It belongs to the class-I aminoacyl-tRNA synthetase family. As to quaternary structure, monomer.

It localises to the cytoplasm. It catalyses the reaction tRNA(Arg) + L-arginine + ATP = L-arginyl-tRNA(Arg) + AMP + diphosphate. In Prochlorococcus marinus (strain MIT 9312), this protein is Arginine--tRNA ligase.